Consider the following 466-residue polypeptide: Asparagine--tRNA ligase (466 aa).

Belongs to the class-II aminoacyl-tRNA synthetase family. Homodimer.

The protein resides in the cytoplasm. The catalysed reaction is tRNA(Asn) + L-asparagine + ATP = L-asparaginyl-tRNA(Asn) + AMP + diphosphate + H(+). This is Asparagine--tRNA ligase from Shewanella loihica (strain ATCC BAA-1088 / PV-4).